Here is a 345-residue protein sequence, read N- to C-terminus: Cuticle collagen 14 (345 aa).

Triple-helical region regions lie at residues 156–185, 207–263, and 268–333; these read GPPG…PGPP, GDGG…PGTY, and GPAG…PGSC. Residues 161 to 345 form a disordered region; it reads AGDGGRDGAD…CPPARLAPGY (185 aa). Pro residues-rich tracts occupy residues 179 to 191, 198 to 223, and 278 to 290; these read IGPP…PGPD, PQCP…PPGA, and RPGP…PAGP. Residues 292-304 show a composition bias toward gly residues; that stretch reads GENGKGGGQGPSG.

Belongs to the cuticular collagen family. In terms of assembly, collagen polypeptide chains are complexed within the cuticle by disulfide bonds and other types of covalent cross-links.

Functionally, nematode cuticles are composed largely of collagen-like proteins. The cuticle functions both as an exoskeleton and as a barrier to protect the worm from its environment. This is Cuticle collagen 14 (col-14) from Caenorhabditis elegans.